We begin with the raw amino-acid sequence, 557 residues long: Leucine-rich glioma-inactivated protein 1 (557 aa).

The first 34 residues, 1–34 (MESESIRRMGNACIPLKRIAYFLCLFSVVLLTEG), serve as a signal peptide directing secretion. Residues 35–72 (KKPAKPKCPAVCTCSKDNALCENARSIPRTVPPDVISL) enclose the LRRNT domain. LRR repeat units lie at residues 92-113 (SLQLLLFTSNSFDVISDDAFIG), 116-137 (HLEYLFIENNNIKSISRHTFRG), and 140-161 (SLIHLSLANNNLQTLPKDIFKG). The LRRCT domain maps to 173-223 (NSFNCDCKLKWLVEWLGHTNATVEDIYCEGPPEYKKRKINSLSPKDFDCII). N-linked (GlcNAc...) asparagine glycosylation occurs at Asn-192. EAR repeat units follow at residues 225 to 267 (EFAK…EWDH), 271 to 313 (TFRN…KRDG), 317 to 364 (KFIK…KWNG), 366 to 415 (GFYS…QWSK), 419 to 462 (LFIN…KWGG), 464 to 506 (SFQD…NWDA), and 510 to 552 (KFVK…KHVI). Residue Asn-277 is glycosylated (N-linked (GlcNAc...) asparagine). Asn-422 carries N-linked (GlcNAc...) asparagine glycosylation.

As to quaternary structure, oligomer. Interacts with KCNA1 within a complex containing KCNA1, KCNA4 and KCNAB1. Can bind to ADAM11 and ADAM23. Part of a complex containing ADAM22, DLG4/PSD95 and CACNG2 (stargazin). Glycosylated. In terms of tissue distribution, expressed in brain. High levels found in hippocampus, thalamic nuclei, neocortex, and molecular and granule cell layers of the cerebellum.

It is found in the secreted. It localises to the synapse. The protein resides in the cytoplasm. Functionally, plays a role in suppressing the production of MMP1/3 through the phosphatidylinositol 3-kinase/ERK pathway. Regulates voltage-gated potassium channels assembled from KCNA1, KCNA4 and KCNAB1. It slows down channel inactivation by precluding channel closure mediated by the KCNAB1 subunit. Ligand for ADAM22 that positively regulates synaptic transmission mediated by AMPA-type glutamate receptors. The chain is Leucine-rich glioma-inactivated protein 1 (Lgi1) from Rattus norvegicus (Rat).